The primary structure comprises 914 residues: Eukaryotic translation initiation factor 3 subunit C-like protein (914 aa).

Residues 1 to 44 (MSRFFTTGSDSESESSLSGEELVTKPVGGNYGKQPLLLSEDEED) are disordered. Over residues 8–21 (GSDSESESSLSGEE) the composition is skewed to low complexity. Phosphoserine occurs at positions 9, 11, 13, 15, 16, 18, and 39. An N6-acetyllysine modification is found at K99. 2 disordered regions span residues 157–302 (TSYK…GGEW) and 523–543 (QLTPPEGSSKSEQDQAENEGE). A phosphoserine mark is found at S166, S178, S181, and S182. A compositionally biased stretch (acidic residues) spans 166 to 190 (SADEDAEKNEEDSEGSSDEDEDEDG). Residues 199-216 (KKSEAPSGESRKFLKKMD) show a composition bias toward basic and acidic residues. A compositionally biased stretch (acidic residues) spans 217 to 232 (DEDEDSEDSEDDEDWD). The span at 261-278 (PTTDEDKKAAEKKREDKA) shows a compositional bias: basic and acidic residues. Over residues 291–300 (EEEEEDNEGG) the composition is skewed to acidic residues. Over residues 523-532 (QLTPPEGSSK) the composition is skewed to polar residues. T525 carries the phosphothreonine modification. An N6-acetyllysine modification is found at K644. A PCI domain is found at 674 to 850 (FHLHINLELL…QTVVMHRTEP (177 aa)). The interval 886-914 (FRDQKDGYRKNEGYMRRGGYRQQQSQTAY) is disordered. Residues 887–900 (RDQKDGYRKNEGYM) show a composition bias toward basic and acidic residues. S910 bears the Phosphoserine mark.

The protein belongs to the eIF-3 subunit C family. In terms of assembly, component of the eukaryotic translation initiation factor 3 (eIF-3) complex, which is composed of 13 subunits: EIF3A, EIF3B, EIF3C, EIF3D, EIF3E, EIF3F, EIF3G, EIF3H, EIF3I, EIF3J, EIF3K, EIF3L and EIF3M. The eIF-3 complex appears to include 3 stable modules: module A is composed of EIF3A, EIF3B, EIF3G and EIF3I; module B is composed of EIF3F, EIF3H, and EIF3M; and module C is composed of EIF3C, EIF3D, EIF3E, EIF3K and EIF3L. EIF3C of module C binds EIF3B of module A and EIF3H of module B, thereby linking the three modules. EIF3J is a labile subunit that binds to the eIF-3 complex via EIF3B. The eIF-3 complex interacts with RPS6KB1 under conditions of nutrient depletion. Mitogenic stimulation leads to binding and activation of a complex composed of MTOR and RPTOR, leading to phosphorylation and release of RPS6KB1 and binding of EIF4B to eIF-3. Phosphorylated. Phosphorylation is enhanced upon serum stimulation.

It localises to the cytoplasm. Its function is as follows. Component of the eukaryotic translation initiation factor 3 (eIF-3) complex, which is required for several steps in the initiation of protein synthesis. The eIF-3 complex associates with the 40S ribosome and facilitates the recruitment of eIF-1, eIF-1A, eIF-2:GTP:methionyl-tRNAi and eIF-5 to form the 43S pre-initiation complex (43S PIC). The eIF-3 complex stimulates mRNA recruitment to the 43S PIC and scanning of the mRNA for AUG recognition. The eIF-3 complex is also required for disassembly and recycling of post-termination ribosomal complexes and subsequently prevents premature joining of the 40S and 60S ribosomal subunits prior to initiation. The eIF-3 complex specifically targets and initiates translation of a subset of mRNAs involved in cell proliferation, including cell cycling, differentiation and apoptosis, and uses different modes of RNA stem-loop binding to exert either translational activation or repression. This is Eukaryotic translation initiation factor 3 subunit C-like protein (EIF3CL) from Homo sapiens (Human).